The sequence spans 48 residues: Phospholipase A2 TI-Nh (48 aa).

Residue His25 is part of the active site. Asp26 serves as a coordination point for Ca(2+).

It belongs to the phospholipase A2 family. Group I subfamily. D49 sub-subfamily. Monomer. Ca(2+) is required as a cofactor. In terms of tissue distribution, expressed by the venom gland.

It localises to the secreted. The catalysed reaction is a 1,2-diacyl-sn-glycero-3-phosphocholine + H2O = a 1-acyl-sn-glycero-3-phosphocholine + a fatty acid + H(+). Its function is as follows. Phospholipase A2 with weak enzymatic activity, which partially inhibits thrombin enzymatic activity (Ki=73 nM), completely inhibits thrombin-induced platelet aggregation and retards fibrin clot formation (IC(50)=0.2 nM). May exert this anticoagulant effect through a non-enzymatic mechanism. This is Phospholipase A2 TI-Nh from Naja haje haje (Egyptian cobra).